Here is a 387-residue protein sequence, read N- to C-terminus: 3-ketoacyl-CoA thiolase (387 aa).

Residue Cys-91 is the Acyl-thioester intermediate of the active site. Catalysis depends on proton acceptor residues His-343 and Cys-373.

It belongs to the thiolase-like superfamily. Thiolase family. Heterotetramer of two alpha chains (FadB) and two beta chains (FadA).

Its subcellular location is the cytoplasm. The catalysed reaction is an acyl-CoA + acetyl-CoA = a 3-oxoacyl-CoA + CoA. Its pathway is lipid metabolism; fatty acid beta-oxidation. Functionally, catalyzes the final step of fatty acid oxidation in which acetyl-CoA is released and the CoA ester of a fatty acid two carbons shorter is formed. This chain is 3-ketoacyl-CoA thiolase, found in Aeromonas hydrophila subsp. hydrophila (strain ATCC 7966 / DSM 30187 / BCRC 13018 / CCUG 14551 / JCM 1027 / KCTC 2358 / NCIMB 9240 / NCTC 8049).